The primary structure comprises 543 residues: MLIRFITDSAKPIVIIGDFLVIIMMIGRALILDGYTDEPAGLGVPPYIGIYPRYAYGALDKYNVKVDYITIDKFREIRGDFNLNKYDAIICICGFHTPGKYLNANPATLKEFVSILYKYDGLKILGGPAATKYGSSMIGGKIEDESKYKAFFDVVAEGDLEAVLNDLLREGSIEKIDFNRYRTYEELREYAIRGAKVVKKHPNYPYIIAEIETYRGCPRALTGGCSFCTEPRRFGLPKFRDEKDIIDEIKVLYNEGIKYFRIGRQPCMFSYKSIDSEKEEVPKPNVEAIEKLFKGIRNVSNPKVLHIDNANPAVIARHEDESREVAKILVKYCTSGNVAAFGVESFDEKVIKANNLLTTPEDVLKAVEILNEVGGKRGETGLPYLLPGINLLFGLKGERKETFTINFEYLKEIYDRGFMIRRINIRQVVPFFGTDITLKDIKKAEKRKKLFLWFKEKVREEIDNKMLKRVVPKGTILRDVFVEVKEREDLYFGRQFGSYPLLVGILDKNLKIGEFVDVEVVDYGRRSITGKVVRDIRKIHIVG.

The Radical SAM core domain maps to 203–460 (NYPYIIAEIE…FLWFKEKVRE (258 aa)). In terms of domain architecture, TRAM spans 470-534 (VVPKGTILRD…RRSITGKVVR (65 aa)).

This is an uncharacterized protein from Methanocaldococcus jannaschii (strain ATCC 43067 / DSM 2661 / JAL-1 / JCM 10045 / NBRC 100440) (Methanococcus jannaschii).